A 503-amino-acid chain; its full sequence is Aromatase (503 aa).

The next 2 helical transmembrane spans lie at 19-39 and 53-73; these read EVVP…LLVW and FLGI…IGSA. 2 residues coordinate substrate: Asp-309 and Met-374. A heme-binding site is contributed by Cys-437.

It belongs to the cytochrome P450 family. It depends on heme as a cofactor.

The protein localises to the endoplasmic reticulum membrane. The protein resides in the microsome membrane. It catalyses the reaction testosterone + 3 reduced [NADPH--hemoprotein reductase] + 3 O2 = 17beta-estradiol + formate + 3 oxidized [NADPH--hemoprotein reductase] + 4 H2O + 4 H(+). The catalysed reaction is androst-4-ene-3,17-dione + 3 reduced [NADPH--hemoprotein reductase] + 3 O2 = estrone + formate + 3 oxidized [NADPH--hemoprotein reductase] + 4 H2O + 4 H(+). It carries out the reaction androst-4-ene-3,17-dione + reduced [NADPH--hemoprotein reductase] + O2 = 19-hydroxyandrost-4-ene-3,17-dione + oxidized [NADPH--hemoprotein reductase] + H2O + H(+). The enzyme catalyses 19-hydroxyandrost-4-ene-3,17-dione + reduced [NADPH--hemoprotein reductase] + O2 = 19-oxo-androst-4-ene-3,17-dione + oxidized [NADPH--hemoprotein reductase] + 2 H2O + H(+). It catalyses the reaction 19-oxo-androst-4-ene-3,17-dione + reduced [NADPH--hemoprotein reductase] + O2 = estrone + formate + oxidized [NADPH--hemoprotein reductase] + H2O + 2 H(+). The catalysed reaction is estrone + reduced [NADPH--hemoprotein reductase] + O2 = 2-hydroxyestrone + oxidized [NADPH--hemoprotein reductase] + H2O + H(+). It carries out the reaction 17beta-hydroxy-5alpha-androstan-3-one + reduced [NADPH--hemoprotein reductase] + O2 = 17beta,19-dihydroxy-3-oxo-5alpha-androstanone + oxidized [NADPH--hemoprotein reductase] + H2O + H(+). The enzyme catalyses 17beta,19-dihydroxy-3-oxo-5alpha-androstanone + reduced [NADPH--hemoprotein reductase] + O2 = 17beta-hydroxy-3,19-dioxo-5alpha-androstanone + oxidized [NADPH--hemoprotein reductase] + 2 H2O + H(+). It catalyses the reaction 17beta-hydroxy-3,19-dioxo-5alpha-androstanone + reduced [NADPH--hemoprotein reductase] + O2 = 17beta-hydroxy-3-oxo-19-nor-5alpha-androst-1-ene + formate + oxidized [NADPH--hemoprotein reductase] + H2O + 2 H(+). Its pathway is steroid hormone biosynthesis. Functionally, a cytochrome P450 monooxygenase that catalyzes the conversion of C19 androgens, androst-4-ene-3,17-dione (androstenedione) and testosterone to the C18 estrogens, estrone and estradiol, respectively. Catalyzes three successive oxidations of C19 androgens: two conventional oxidations at C19 yielding 19-hydroxy and 19-oxo/19-aldehyde derivatives, followed by a third oxidative aromatization step that involves C1-beta hydrogen abstraction combined with cleavage of the C10-C19 bond to yield a phenolic A ring and formic acid. Alternatively, the third oxidative reaction yields a 19-norsteroid and formic acid. Converts dihydrotestosterone to delta1,10-dehydro 19-nordihydrotestosterone and may play a role in homeostasis of this potent androgen. Also displays 2-hydroxylase activity toward estrone. Mechanistically, uses molecular oxygen inserting one oxygen atom into a substrate, and reducing the second into a water molecule, with two electrons provided by NADPH via cytochrome P450 reductase (CPR; NADPH-ferrihemoprotein reductase). This chain is Aromatase (CYP19A1), found in Bos taurus (Bovine).